A 210-amino-acid polypeptide reads, in one-letter code: Urease accessory protein UreG (210 aa).

14-21 serves as a coordination point for GTP; sequence GPVGSGKT.

The protein belongs to the SIMIBI class G3E GTPase family. UreG subfamily. In terms of assembly, homodimer. UreD, UreF and UreG form a complex that acts as a GTP-hydrolysis-dependent molecular chaperone, activating the urease apoprotein by helping to assemble the nickel containing metallocenter of UreC. The UreE protein probably delivers the nickel.

The protein localises to the cytoplasm. Facilitates the functional incorporation of the urease nickel metallocenter. This process requires GTP hydrolysis, probably effectuated by UreG. The chain is Urease accessory protein UreG from Rhodopseudomonas palustris (strain BisB5).